Here is a 396-residue protein sequence, read N- to C-terminus: Putative F-box/kelch-repeat protein At3g17540 (396 aa).

One can recognise an F-box domain in the interval 4–50 (TMVISDLPHEIESEILSRVPTKSLAKLHTTCKRWYALFRDPRFVKKN). 3 Kelch repeats span residues 163–209 (LRYC…GMSL), 253–299 (VLSI…FLAV), and 338–386 (RIYI…KRKG).

This is Putative F-box/kelch-repeat protein At3g17540 from Arabidopsis thaliana (Mouse-ear cress).